Reading from the N-terminus, the 361-residue chain is 3-dehydroquinate synthase (361 aa).

NAD(+) contacts are provided by residues 72–77 (SGEKEK), 130–131 (TT), Lys142, and Lys151. Glu184, His247, and His264 together coordinate Zn(2+).

Belongs to the sugar phosphate cyclases superfamily. Dehydroquinate synthase family. Co(2+) serves as cofactor. It depends on Zn(2+) as a cofactor. Requires NAD(+) as cofactor.

The protein localises to the cytoplasm. It carries out the reaction 7-phospho-2-dehydro-3-deoxy-D-arabino-heptonate = 3-dehydroquinate + phosphate. The protein operates within metabolic intermediate biosynthesis; chorismate biosynthesis; chorismate from D-erythrose 4-phosphate and phosphoenolpyruvate: step 2/7. Catalyzes the conversion of 3-deoxy-D-arabino-heptulosonate 7-phosphate (DAHP) to dehydroquinate (DHQ). The sequence is that of 3-dehydroquinate synthase from Bacillus cereus (strain B4264).